The following is a 512-amino-acid chain: Centrosomal protein CCDC61 (512 aa).

At Met-1 the chain carries N-acetylmethionine. The tract at residues Met-1–Pro-143 is head domain. 2 coiled-coil regions span residues Ile-178 to Glu-205 and Cys-248 to Glu-275. Positions Leu-276–Val-477 are disordered. The residue at position 285 (Thr-285) is a Phosphothreonine. Residues Thr-293–Ala-306 are compositionally biased toward basic and acidic residues. 4 positions are modified to phosphoserine: Ser-334, Ser-336, Ser-373, and Ser-376. Low complexity predominate over residues Arg-407–Ser-425. Residues Ser-447 and Ser-473 each carry the phosphoserine modification.

Belongs to the CCDC61 family. Forms homodimers (via head domain). Interacts with CEP170. Interacts with PCM1 and CEP131. Binds tubulin.

It is found in the cytoplasm. It localises to the cytoskeleton. The protein localises to the microtubule organizing center. The protein resides in the centrosome. Its subcellular location is the centriolar satellite. It is found in the cilium basal body. Its function is as follows. Microtubule-binding centrosomal protein required for centriole cohesion, independently of the centrosome-associated protein/CEP250 and rootletin/CROCC linker. In interphase, required for anchoring microtubule at the mother centriole subdistal appendages and for centrosome positioning. During mitosis, may be involved in spindle assembly and chromatin alignment by regulating the organization of spindle microtubules into a symmetrical structure. Has been proposed to play a role in CEP170 recruitment to centrosomes. However, this function could not be confirmed. Plays a non-essential role in ciliogenesis. The protein is Centrosomal protein CCDC61 of Homo sapiens (Human).